Consider the following 2498-residue polypeptide: MTIRSAEEDPRRLLEEFNLTDNAATLGSCFPWLFEQAAHAHFDRTAVICGDAQLTYGTLNGRANIIAQILVNRNIGSGDVVGVALDRSVDLLVVLLAVMKSGAAYVPIDPALPAQRILQMMNDTAPKVVLTDHSVLDTLSLWNGPQLSIEELRVEMSLNPANTPNIRRDIQPEDLAYVIYTSGSTGKPKGVEISHGAVANFVLSMQVVPGCNKHDRILAVSTISFDMTLWDLYAPLACGACTVIAQTHEQKDAEALIELIRENGITSMLATPATWQMLFHAGWQGQPRLKTIKTGGESLSQHLSERLLAAAEKVYNGYGPTEATGCVSLWPVQAGEEVLIGTPIANTKLYVLDADLSPMPLGCAGELYIGGAGVACGYRNNPELTRSRFLANPFHEGLMYRTGDLACLVTPKKLKFLGRADSQVKIRGQRLELGEVEAAITSHGDVAHAIVINREGQLAAYCVRDLHRAVEIDPAKVSLSSILRPWLVERLPAYMVPSFIMEVDHIPLTLNGKVDHKSLPAPMAETTTTNQPATELERDIAAIWSTVLGHDHIGRDDNFFQIGGDSVRLVRMQADLKKLLGRSVPITVLFQQYTIKSLAGYLMDMDRPIPADESIHQPNPKPHHVDSDDIAVVSMACRLPGGIETPEAFWELLERGGDATTDVPPERWDADALYDPDPDAPGKSYCRRGGFVPSFGAFDTKFFHLLPNEARALDPAQYIMLETSWEAFERAGYRTQQLRGSSTGVFIGVNNTVAHGSPSTHAHGLADLQGYTGTGTAGGTMSGRVSYVLGLEGPSLTIDTACSSSLVATHLACTALRQGECDMAVTGAVTHLPAPGLHVEFSRLRGVAPDGRCRAFAADAQGIGIAEGAAVVVLKRLSDARRDGDTIYGVLRGSAVNHGGQGAAGLTVPSGAAQERVIRAALASSRLLPDDIDYIEAHGTGTRLGDPIEGMALTEVFGGSRSNTSQSLWIGSSKTNVGHTQAAAGLVGLIKVLLALRYNTLPPTLHITQPTPAIDWHRANMAPVQTKQHWLAGGERPRRAGVSSFGIGGTNAHVIVEEPPRCSVSTESTLYVPLPHPVPFLLSSPVEAGLQPQADKLHMYLSQSMSKGDPGNIAYSLATTRNHFPQRIVLLAQDTTDLVAQLVDLPRKAIVSPRGSSPEPRLAMLFAGQGSQQLGRGKTLAKHYRVFRETLEEIATQFYGILQEPLLDVMHAAADSALAALLQRSDYAQPALFALEVALWRLWQSWGVQPDMVLGHSIGELTAAHIAGVMDLPDACRLVAARGRLMETLPCHGGMASLEASASEVSLAITTLDLGGQVGIAAYNTPSQTVISGDRDALDILIAYFSGQDRQSKTLPVSRAFHSHHIDGMLTAYQAVVQSVQLNAPSLPIVSTLTGRRVEPCELQQPTYWVRQAREAVRYSDGIQALADHGMNVFLELGPQSVLCGMGAAVLDGSENRTTWLPSLAPNKDEVVAIQEILARLHVQHVPVNWQGYFQPFGCRRLELPTYAFQRERVHSGTKERDHGKREARPQASAFYDKVFQIDWRPFAIQHVQPRGIWGLQCSSGYVKWAEAVRAALFQGGIQCILLPSLSLQGTKTLDGVLCLWDSHGDVISQVHEFAAQGLTQLKEAANTRPSLPLVWLTSQAVGTARDDQPLALGAGLLWGLMRTARNEHPERSLRLIDLGRDDQNRVDASGLAPLLMLHTEPECALRQGMVLVPRMQRMELEFGDATQTLLRSDGAVLITGGLSGLGARIAEWLASTHGIRDLVLTSRRGMDTPGAATLVRRLAHLGTKTTVVSGDTTDPSHLNSLLSMFSHARPLRGVVHAAGVRDTSMLGTSTPQRCVGALAPKVIGAWYLHQFTRTRNDLDLFVVVSSFWGVMGTSGHATDAAANAVLDSLVYTRQSQGLPAVCVAYGPLPDINIPPGLLPTIRDQLQQMGIKTLTPDDTISLFELAARRSHGVTVAAALDLHQLQSYSSQRGGIPALLRLLLDRDTPQKHQGPALYDVLRRTAPDQRREILLRTIQEAVATTLGFSQPDEVDIHRSLPDMGIDSLGALLVRNQLAGLLGQALPANIVFIHPSLDELSRYLLPQLVDSNRDASSVAEPDMASASTAADVSGLNLMAIRKGCVDSSFTFDNALPKPTPQSVFVTGATEFVGAFLVHELLDQGKVTYCLVHAHSIDHARQQIVSWLQDYNLWKIGYAELLRPLVGDVCQVRLGLDESVFDDLAHRVDTIYHASCLVDWMRPLDDYIGPNVTSTHEVLRLASTSHAKTIHYLSTSATLPYHLGYDIPEDALTYGYAMSKLMAERMVIAARCRGAQAFIYRLPFITASATSGHFQLNNRDFLHNLISGSLEMGCFPSLDADLSLVFPVDYVCRTIITLAHTTPGSTHIRYDYDFKNPQAQSFDHYFNLLATVGKDLESLAFSTWRQRALAYAAAKPASSLTSIADILKNSTEEAVVKMFQCPPIVTPFLGGEEFPVPSVNDQSVRKYLHRMDLTL.

The segment at 34–427 is adenylation (A) domain; that stretch reads FEQAAHAHFD…GRADSQVKIR (394 aa). Residues 531-606 enclose the Carrier 1 domain; that stretch reads QPATELERDI…SLAGYLMDMD (76 aa). An O-(pantetheine 4'-phosphoryl)serine modification is found at serine 566. Residues 627-1058 enclose the Ketosynthase family 3 (KS3) domain; sequence SDDIAVVSMA…GTNAHVIVEE (432 aa). Residues cysteine 802, histidine 938, and histidine 979 each act as for beta-ketoacyl synthase activity in the active site. The interval 1165-1485 is malonyl-CoA:ACP transacylase (MAT) domain; sequence LFAGQGSQQL…EILARLHVQH (321 aa). The ketoreductase (KR) domain stretch occupies residues 1739 to 1917; that stretch reads GAVLITGGLS…PAVCVAYGPL (179 aa). The Carrier 2 domain occupies 2017–2092; sequence EILLRTIQEA…ELSRYLLPQL (76 aa). O-(pantetheine 4'-phosphoryl)serine is present on serine 2052. The interval 2149 to 2378 is thioester reductase (TE) domain; it reads VTGATEFVGA…FPVDYVCRTI (230 aa).

It in the C-terminal section; belongs to the NRP synthetase family. It depends on pantetheine 4'-phosphate as a cofactor.

It participates in secondary metabolite biosynthesis. PKS-NRPS hybrid synthetase; part of the gene cluster that mediates the biosynthesis of aspcandine, a pyrrolobenzazepine alkaloid. Initially, the indoleamine 2,3-dioxygenase acdA accepts L-tryptophan and performs the oxidative opening of the indole ring to yield N'-formyl-L-kynurenine, which undergoes the spontaneous deformylation reaction to provide L-kynurenine. The kynurenine 3-monooxygenase acdD then hydroxylates L-kynurenine to afford 3-hydroxy-L-kynurenine. 3-hydroxy-L-kynurenine is activated by the A domain of the NRPS-PKS acdB and subsequently loaded onto the enzyme. The KS domain conducts the decarboxylative condensation of the 3-hydroxy-L-kynurenyl and malonyl moieties, and subsequent nucleophilic attacks by the two amino groups would occur nonenzymatically at two distinct positions, achieving the chain release and the construction of the tricyclic system. Finally, a dehydration reaction completes the biosynthesis to yield aspcandine. This Aspergillus candidus protein is PKS-NRPS hybrid synthetase acdB.